The sequence spans 133 residues: Ribosome-binding factor A (133 aa).

This sequence belongs to the RbfA family. Monomer. Binds 30S ribosomal subunits, but not 50S ribosomal subunits or 70S ribosomes.

It localises to the cytoplasm. In terms of biological role, one of several proteins that assist in the late maturation steps of the functional core of the 30S ribosomal subunit. Associates with free 30S ribosomal subunits (but not with 30S subunits that are part of 70S ribosomes or polysomes). Required for efficient processing of 16S rRNA. May interact with the 5'-terminal helix region of 16S rRNA. The chain is Ribosome-binding factor A from Synechocystis sp. (strain ATCC 27184 / PCC 6803 / Kazusa).